A 277-amino-acid chain; its full sequence is GATA transcription factor 15 (277 aa).

Residues 52 to 94 (AYDDHSTVTTSPSSPSSSSTGSVDCTLSLGTPSSRRAEPVAAA) are disordered. The span at 58 to 74 (TVTTSPSSPSSSSTGSV) shows a compositional bias: low complexity. The GATA-type zinc finger occupies 154–179 (CANCGTASTPLWRNGPRGPKSLCNAC).

The protein belongs to the type IV zinc-finger family. Class B subfamily.

Its function is as follows. Probable transcription factor that regulates organogenesis during transition from the vegetative to the reproductive phase. Regulates the expression of CYP78A11/PLA1, HD3A and MADS1 during reproductive development in rice. May act upstream of CYP78A11/PLA1 during panicle development. Acts independently of the photoperiodic and gibberellin signaling pathways. In Oryza sativa subsp. indica (Rice), this protein is GATA transcription factor 15.